The primary structure comprises 291 residues: Elongation factor Ts (291 aa).

Residues 79-82 (TDFV) are involved in Mg(2+) ion dislocation from EF-Tu.

Belongs to the EF-Ts family.

It localises to the cytoplasm. Functionally, associates with the EF-Tu.GDP complex and induces the exchange of GDP to GTP. It remains bound to the aminoacyl-tRNA.EF-Tu.GTP complex up to the GTP hydrolysis stage on the ribosome. This Dinoroseobacter shibae (strain DSM 16493 / NCIMB 14021 / DFL 12) protein is Elongation factor Ts.